The sequence spans 984 residues: Ephrin type-A receptor 3 (984 aa).

The signal sequence occupies residues 1–20 (MDCHLSILILFGCCVLSCSR). Topologically, residues 21–541 (ELSPQPSNEV…SFSISGENSH (521 aa)) are extracellular. Residues 29-207 (EVNLLDSKTI…YFKKCPFTVK (179 aa)) enclose the Eph LBD domain. Residues N232, N337, N391, N404, and N493 are each glycosylated (N-linked (GlcNAc...) asparagine). 2 consecutive Fibronectin type-III domains span residues 325 to 435 (PPSA…TNQA) and 436 to 532 (APSP…SPDS). Residues 542–565 (VVMIAISAAVAIIVLTVVTYVLVG) form a helical membrane-spanning segment. Residues 566-984 (RFCGYHKSKH…TQSKNGPVPV (419 aa)) are Cytoplasmic-facing. A phosphotyrosine; by autocatalysis mark is found at Y597 and Y603. Residues 622–883 (IAIDKVVGAG…QIVSILDKLI (262 aa)) form the Protein kinase domain. ATP-binding positions include 629–634 (GAGEFG), K654, and 701–707 (EYMENGS). Residue Y702 is modified to Phosphotyrosine; by autocatalysis. D747 acts as the Proton acceptor in catalysis. 751 to 752 (RN) serves as a coordination point for ATP. The residue at position 780 (Y780) is a Phosphotyrosine; by autocatalysis. The 65-residue stretch at 912–976 (ATFHTTGDWL…ISSIKALETQ (65 aa)) folds into the SAM domain. Y938 bears the Phosphotyrosine mark. Residues 982 to 984 (VPV) carry the PDZ-binding motif.

This sequence belongs to the protein kinase superfamily. Tyr protein kinase family. Ephrin receptor subfamily. In terms of assembly, heterotetramer upon binding of the ligand. The heterotetramer is composed of an ephrin dimer and a receptor dimer. Oligomerization is probably required to induce biological responses. Forms a ternary EFNA5-EPHA3-ADAM10 complex mediating EFNA5 extracellular domain shedding by ADAM10 which regulates the EFNA5-EPHA3 complex internalization and function. Interacts (phosphorylated) with PTPN1; dephosphorylates EPHA3 and may regulate its trafficking and function. Interacts (phosphorylated) with CRK; mediates EFNA5-EPHA3 signaling through RHOA GTPase activation. Interacts with NCK1 (via SH2 domain); mediates EFNA5-EPHA3 signaling. Post-translationally, autophosphorylates upon activation by EFNA5. Phosphorylation on Tyr-603 mediates interaction with NCK1. Dephosphorylated by PTPN1. Most abundant in the heart, brain and lung.

Its subcellular location is the cell membrane. It catalyses the reaction L-tyrosyl-[protein] + ATP = O-phospho-L-tyrosyl-[protein] + ADP + H(+). Functionally, receptor tyrosine kinase which binds promiscuously membrane-bound ephrin family ligands residing on adjacent cells, leading to contact-dependent bidirectional signaling into neighboring cells. The signaling pathway downstream of the receptor is referred to as forward signaling while the signaling pathway downstream of the ephrin ligand is referred to as reverse signaling. Highly promiscuous for ephrin-A ligands it binds preferentially EFNA5. Upon activation by EFNA5 regulates cell-cell adhesion, cytoskeletal organization and cell migration. Plays a role in cardiac cells migration and differentiation and regulates the formation of the atrioventricular canal and septum during development probably through activation by EFNA1. Involved in the retinotectal mapping of neurons. May also control the segregation but not the guidance of motor and sensory axons during neuromuscular circuit development. The chain is Ephrin type-A receptor 3 (Epha3) from Rattus norvegicus (Rat).